Consider the following 359-residue polypeptide: S-adenosylmethionine:tRNA ribosyltransferase-isomerase (359 aa).

This sequence belongs to the QueA family. As to quaternary structure, monomer.

It localises to the cytoplasm. The catalysed reaction is 7-aminomethyl-7-carbaguanosine(34) in tRNA + S-adenosyl-L-methionine = epoxyqueuosine(34) in tRNA + adenine + L-methionine + 2 H(+). Its pathway is tRNA modification; tRNA-queuosine biosynthesis. Functionally, transfers and isomerizes the ribose moiety from AdoMet to the 7-aminomethyl group of 7-deazaguanine (preQ1-tRNA) to give epoxyqueuosine (oQ-tRNA). The protein is S-adenosylmethionine:tRNA ribosyltransferase-isomerase of Synechococcus sp. (strain ATCC 27144 / PCC 6301 / SAUG 1402/1) (Anacystis nidulans).